Consider the following 874-residue polypeptide: Alanine--tRNA ligase (874 aa).

Positions 563, 567, 665, and 669 each coordinate Zn(2+).

Belongs to the class-II aminoacyl-tRNA synthetase family. It depends on Zn(2+) as a cofactor.

It is found in the cytoplasm. It catalyses the reaction tRNA(Ala) + L-alanine + ATP = L-alanyl-tRNA(Ala) + AMP + diphosphate. In terms of biological role, catalyzes the attachment of alanine to tRNA(Ala) in a two-step reaction: alanine is first activated by ATP to form Ala-AMP and then transferred to the acceptor end of tRNA(Ala). Also edits incorrectly charged Ser-tRNA(Ala) and Gly-tRNA(Ala) via its editing domain. The polypeptide is Alanine--tRNA ligase (Haemophilus ducreyi (strain 35000HP / ATCC 700724)).